We begin with the raw amino-acid sequence, 163 residues long: Urease accessory protein UreE (163 aa).

The segment at glutamate 134–glutamate 163 is disordered.

The protein belongs to the UreE family.

It localises to the cytoplasm. Involved in urease metallocenter assembly. Binds nickel. Probably functions as a nickel donor during metallocenter assembly. In Methylobacillus flagellatus (strain ATCC 51484 / DSM 6875 / VKM B-1610 / KT), this protein is Urease accessory protein UreE.